We begin with the raw amino-acid sequence, 354 residues long: Glycerol-3-phosphate dehydrogenase [NAD(+)], glycosomal (354 aa).

Residues Gly-15 to Gly-20, Phe-90, Lys-118, and Ala-150 contribute to the NAD(+) site. Residue Lys-118 participates in substrate binding. Residue Lys-203 is the Proton acceptor of the active site. Arg-267 and Glu-293 together coordinate NAD(+). Arg-267–Asn-268 lines the substrate pocket. The Microbody targeting signal motif lies at Ser-352–Met-354.

Belongs to the NAD-dependent glycerol-3-phosphate dehydrogenase family.

It localises to the glycosome. The catalysed reaction is sn-glycerol 3-phosphate + NAD(+) = dihydroxyacetone phosphate + NADH + H(+). The polypeptide is Glycerol-3-phosphate dehydrogenase [NAD(+)], glycosomal (GPD) (Trypanosoma brucei brucei).